Consider the following 554-residue polypeptide: Glucose-6-phosphate isomerase (554 aa).

Glutamate 359 functions as the Proton donor in the catalytic mechanism. Catalysis depends on residues histidine 390 and lysine 518.

Belongs to the GPI family.

It is found in the cytoplasm. The catalysed reaction is alpha-D-glucose 6-phosphate = beta-D-fructose 6-phosphate. It participates in carbohydrate biosynthesis; gluconeogenesis. It functions in the pathway carbohydrate degradation; glycolysis; D-glyceraldehyde 3-phosphate and glycerone phosphate from D-glucose: step 2/4. Catalyzes the reversible isomerization of glucose-6-phosphate to fructose-6-phosphate. This is Glucose-6-phosphate isomerase from Pseudomonas syringae pv. syringae (strain B728a).